The chain runs to 435 residues: Adenylosuccinate synthetase (435 aa).

GTP-binding positions include 11–17 (GDEGKGK) and 39–41 (GHT). Aspartate 12 serves as the catalytic Proton acceptor. 2 residues coordinate Mg(2+): aspartate 12 and glycine 39. IMP is bound by residues 12–15 (DEGK), 37–40 (NAGH), threonine 128, arginine 142, glutamine 223, threonine 238, and arginine 302. Residue histidine 40 is the Proton donor of the active site. 298 to 304 (SVTGRPR) lines the substrate pocket. Residues arginine 304, 330 to 332 (KLD), and 412 to 414 (STG) each bind GTP.

Belongs to the adenylosuccinate synthetase family. In terms of assembly, homodimer. It depends on Mg(2+) as a cofactor.

The protein localises to the cytoplasm. The enzyme catalyses IMP + L-aspartate + GTP = N(6)-(1,2-dicarboxyethyl)-AMP + GDP + phosphate + 2 H(+). Its pathway is purine metabolism; AMP biosynthesis via de novo pathway; AMP from IMP: step 1/2. Functionally, plays an important role in the de novo pathway of purine nucleotide biosynthesis. Catalyzes the first committed step in the biosynthesis of AMP from IMP. This Coxiella burnetii (strain CbuK_Q154) (Coxiella burnetii (strain Q154)) protein is Adenylosuccinate synthetase.